Consider the following 563-residue polypeptide: Putative solute carrier family 26 member 10P (563 aa).

A run of 5 helical transmembrane segments spans residues 45–65 (ALLA…PVLI), 75–91 (LSTG…GSAV), 116–136 (VGVA…MFVL), 152–172 (ALTS…LLGL), and 352–372 (LAGL…GPFF). Residues 406 to 541 (RVDFLLQVPG…VSVQDAAAYA (136 aa)) enclose the STAS domain.

It belongs to the SLC26A/SulP transporter (TC 2.A.53) family.

Its subcellular location is the membrane. Chloride/bicarbonate exchanger. In Homo sapiens (Human), this protein is Putative solute carrier family 26 member 10P (SLC26A10P).